The chain runs to 368 residues: D-amino-acid oxidase (368 aa).

The FAD site is built by alanine 11, serine 14, lysine 35, histidine 36, cysteine 46, serine 47, glycine 51, asparagine 53, and phenylalanine 174. Residues cysteine 230 and cysteine 285 are joined by a disulfide bond. (R)-lactate contacts are provided by tyrosine 244, tyrosine 260, and arginine 308. Anthranilate is bound by residues tyrosine 244, tyrosine 260, and arginine 308. Arginine 308, glycine 334, glycine 337, tyrosine 338, and glutamine 339 together coordinate FAD. The Microbody targeting signal motif lies at 366–368 (ARL).

This sequence belongs to the DAMOX/DASOX family. Homotetramer. Requires FAD as cofactor. In terms of processing, the disulfide bond might contribute to the high thermal stability of the protein.

It localises to the peroxisome matrix. The catalysed reaction is a D-alpha-amino acid + O2 + H2O = a 2-oxocarboxylate + H2O2 + NH4(+). It catalyses the reaction D-alanine + O2 + H2O = pyruvate + H2O2 + NH4(+). The enzyme catalyses D-glutamate + O2 + H2O = H2O2 + 2-oxoglutarate + NH4(+). It carries out the reaction D-serine + O2 + H2O = 3-hydroxypyruvate + H2O2 + NH4(+). The catalysed reaction is D-phenylalanine + O2 + H2O = 3-phenylpyruvate + H2O2 + NH4(+). It catalyses the reaction D-arginine + O2 + H2O = 5-guanidino-2-oxopentanoate + H2O2 + NH4(+). The enzyme catalyses D-methionine + O2 + H2O = 4-methylsulfanyl-2-oxobutanoate + H2O2 + NH4(+). It carries out the reaction D-leucine + O2 + H2O = 4-methyl-2-oxopentanoate + H2O2 + NH4(+). The catalysed reaction is D-lysine + O2 + H2O = 6-amino-2-oxohexanoate + H2O2 + NH4(+). It catalyses the reaction D-valine + O2 + H2O = 3-methyl-2-oxobutanoate + H2O2 + NH4(+). The enzyme catalyses D-histidine + O2 + H2O = 3-(imidazol-5-yl)pyruvate + H2O2 + NH4(+). It carries out the reaction D-glutamine + O2 + H2O = 2-oxoglutaramate + H2O2 + NH4(+). The catalysed reaction is D-isoleucine + O2 + H2O = (R)-3-methyl-2-oxopentanoate + H2O2 + NH4(+). It catalyses the reaction D-allo-isoleucine + O2 + H2O = (S)-3-methyl-2-oxopentanoate + H2O2 + NH4(+). The enzyme catalyses D-threonine + O2 + H2O = (S)-3-hydroxy-2-oxobutanoate + H2O2 + NH4(+). It carries out the reaction D-asparagine + O2 + H2O = 2-oxosuccinamate + H2O2 + NH4(+). The catalysed reaction is D-tryptophan + O2 + H2O = indole-3-pyruvate + H2O2 + NH4(+). It catalyses the reaction D-tyrosine + O2 + H2O = 3-(4-hydroxyphenyl)pyruvate + H2O2 + NH4(+). Its activity is regulated as follows. Partially inhibited by benzoate, crotonate, and D-malate. Its function is as follows. Catalyzes the oxidative deamination of D-amino acids with broad substrate specificity. Enables the organism to utilize D-amino acids as a source of nutrients. Unusually, has high activity on D-glutamate. In Talaromyces emersonii (Thermophilic fungus), this protein is D-amino-acid oxidase.